A 209-amino-acid chain; its full sequence is COP9 signalosome complex subunit 8 (209 aa).

Positions 8–179 (DNAFSFRKLL…GTLDVSLNRF (172 aa)) constitute a PCI domain. The residue at position 175 (Ser-175) is a Phosphoserine.

The protein belongs to the CSN8 family. As to quaternary structure, component of the CSN complex, composed of COPS1/GPS1, COPS2, COPS3, COPS4, COPS5, COPS6, COPS7 (COPS7A or COPS7B), COPS8 and COPS9. In the complex, it probably interacts directly with COPS3, COPS4 and COPS7 (COPS7A or COPS7B). Widely expressed.

Its subcellular location is the cytoplasm. The protein localises to the nucleus. In terms of biological role, component of the COP9 signalosome complex (CSN), a complex involved in various cellular and developmental processes. The CSN complex is an essential regulator of the ubiquitin (Ubl) conjugation pathway by mediating the deneddylation of the cullin subunits of SCF-type E3 ligase complexes, leading to decrease the Ubl ligase activity of SCF-type complexes such as SCF, CSA or DDB2. The complex is also involved in phosphorylation of p53/TP53, c-jun/JUN, IkappaBalpha/NFKBIA, ITPK1 and IRF8/ICSBP, possibly via its association with CK2 and PKD kinases. CSN-dependent phosphorylation of TP53 and JUN promotes and protects degradation by the Ubl system, respectively. This is COP9 signalosome complex subunit 8 (Cops8) from Mus musculus (Mouse).